The chain runs to 324 residues: Germination protease (324 aa).

Residues 1–10 constitute a propeptide that is removed on maturation; the sequence is MIIVLGIRTD.

Belongs to the peptidase A25 family. As to quaternary structure, homotetramer. Post-translationally, autoproteolytically processed. The inactive tetrameric zymogen termed p46 autoprocesses to a smaller form termed p41, which is active only during spore germination.

The enzyme catalyses Endopeptidase action with P4 Glu or Asp, P1 preferably Glu &gt; Asp, P1' hydrophobic and P2' Ala.. Functionally, initiates the rapid degradation of small, acid-soluble proteins during spore germination. This is Germination protease from Caldanaerobacter subterraneus subsp. tengcongensis (strain DSM 15242 / JCM 11007 / NBRC 100824 / MB4) (Thermoanaerobacter tengcongensis).